A 246-amino-acid chain; its full sequence is uncharacterized protein (246 aa).

Transmembrane regions (helical) follow at residues 32-52 (TLFF…VGFI), 69-89 (IIAI…MCPF), 121-141 (IYFK…GVKI), and 146-166 (LAYL…MFFC). 2 4Fe-4S ferredoxin-type domains span residues 185–213 (FKLK…ITEK) and 210–239 (ITEK…FSAF). The [4Fe-4S] cluster site is built by cysteine 194, cysteine 197, cysteine 200, cysteine 204, cysteine 219, cysteine 222, cysteine 225, and cysteine 229.

The protein localises to the cell membrane. This is an uncharacterized protein from Methanocaldococcus jannaschii (strain ATCC 43067 / DSM 2661 / JAL-1 / JCM 10045 / NBRC 100440) (Methanococcus jannaschii).